Reading from the N-terminus, the 392-residue chain is MSVRESFNPESYELDKSFRLTRFAELKGTGCKVPQDVLQKLLESLQENHFQEDEQFLGAVMPRLGIGMDTCVIPLRHGGLSLVQTTDYIYPIVDDPYMMGRIACANVLSDLYAMGVTECDNMLMLLGVSNKLTDRERDKVMPLIIQGFKDAAEEAGTSVTGGQTVLNPWVVLGGVATTVCQPNEFIMPDNAVPGDVLVLTKPLGTQVAVAVHQWLDIPEKWNKIKLVVTQEDVELAYQEAMMNMARLNRTAAGLMHTFNAHAATDITGFGILGHAQNLAKQQRNEVSFVIHNLPVLAKMAAVSKACGNMFGLMHGSCPETSGGLLICLPREQAARFCAEIKSPKYGEGHQAWIIGIVEKGNRTARIIDKPRIIEVAPQIATQNVNPTPGATS.

C31 is an active-site residue. Residues K32, 67 to 69 (GMD), D87, D110, and 161 to 164 (GGQT) each bind ATP. D69 is a Mg(2+) binding site. Position 110 (D110) interacts with Mg(2+). D265 lines the Mg(2+) pocket.

This sequence belongs to the selenophosphate synthase 1 family. Class II subfamily. Homodimer. Mg(2+) is required as a cofactor.

It is found in the cell membrane. It localises to the nucleus membrane. It catalyses the reaction hydrogenselenide + ATP + H2O = selenophosphate + AMP + phosphate + 2 H(+). In terms of biological role, synthesizes selenophosphate from selenide and ATP. The polypeptide is Selenide, water dikinase 1 (sephs1) (Xenopus laevis (African clawed frog)).